Here is a 114-residue protein sequence, read N- to C-terminus: Large ribosomal subunit protein uL18 (114 aa).

This sequence belongs to the universal ribosomal protein uL18 family. In terms of assembly, part of the 50S ribosomal subunit; part of the 5S rRNA/L5/L18/L25 subcomplex. Contacts the 23S rRNA. Contacts protein L27 and the 5S rRNA.

In terms of biological role, this is one of the proteins that bind and probably mediate the attachment of the 5S RNA into the large ribosomal subunit, where it forms part of the central protuberance. The protein is Large ribosomal subunit protein uL18 (rplR) of Deinococcus radiodurans (strain ATCC 13939 / DSM 20539 / JCM 16871 / CCUG 27074 / LMG 4051 / NBRC 15346 / NCIMB 9279 / VKM B-1422 / R1).